We begin with the raw amino-acid sequence, 104 residues long: Sweet protein mabinlin-3 (104 aa).

4 disulfide bridges follow: cysteine 4–cysteine 53, cysteine 17–cysteine 42, cysteine 43–cysteine 91, and cysteine 55–cysteine 99.

The protein belongs to the 2S seed storage albumins family. As to quaternary structure, heterodimer of a small A and a large B chain linked by disulfide bonds.

Heat stable 2S seed storage protein having sweetness-inducing activity. The chain is Sweet protein mabinlin-3 from Capparis masaikai (Mabinlang).